The sequence spans 369 residues: UDP-N-acetylglucosamine--N-acetylmuramyl-(pentapeptide) pyrophosphoryl-undecaprenol N-acetylglucosamine transferase (369 aa).

Residues 15–17, Asn-126, Arg-169, Ser-197, and Gln-299 contribute to the UDP-N-acetyl-alpha-D-glucosamine site; that span reads TGG.

Belongs to the glycosyltransferase 28 family. MurG subfamily.

The protein localises to the cell inner membrane. It catalyses the reaction di-trans,octa-cis-undecaprenyl diphospho-N-acetyl-alpha-D-muramoyl-L-alanyl-D-glutamyl-meso-2,6-diaminopimeloyl-D-alanyl-D-alanine + UDP-N-acetyl-alpha-D-glucosamine = di-trans,octa-cis-undecaprenyl diphospho-[N-acetyl-alpha-D-glucosaminyl-(1-&gt;4)]-N-acetyl-alpha-D-muramoyl-L-alanyl-D-glutamyl-meso-2,6-diaminopimeloyl-D-alanyl-D-alanine + UDP + H(+). Its pathway is cell wall biogenesis; peptidoglycan biosynthesis. Functionally, cell wall formation. Catalyzes the transfer of a GlcNAc subunit on undecaprenyl-pyrophosphoryl-MurNAc-pentapeptide (lipid intermediate I) to form undecaprenyl-pyrophosphoryl-MurNAc-(pentapeptide)GlcNAc (lipid intermediate II). In Methylobacterium radiotolerans (strain ATCC 27329 / DSM 1819 / JCM 2831 / NBRC 15690 / NCIMB 10815 / 0-1), this protein is UDP-N-acetylglucosamine--N-acetylmuramyl-(pentapeptide) pyrophosphoryl-undecaprenol N-acetylglucosamine transferase.